A 348-amino-acid chain; its full sequence is Selenide, water dikinase (348 aa).

Cys17 is an active-site residue. Residues Lys20 and 48-50 (TSD) each bind ATP. Asp51 is a binding site for Mg(2+). ATP is bound by residues Asp68, Asp91, and 139–141 (GHT). Position 91 (Asp91) interacts with Mg(2+). Asp227 contributes to the Mg(2+) binding site.

Belongs to the selenophosphate synthase 1 family. Class I subfamily. As to quaternary structure, homodimer. Mg(2+) serves as cofactor.

It carries out the reaction hydrogenselenide + ATP + H2O = selenophosphate + AMP + phosphate + 2 H(+). Synthesizes selenophosphate from selenide and ATP. The protein is Selenide, water dikinase of Dechloromonas aromatica (strain RCB).